Here is a 202-residue protein sequence, read N- to C-terminus: ATP-dependent Clp protease proteolytic subunit 1 (202 aa).

The Nucleophile role is filled by serine 102. Residue histidine 127 is part of the active site.

It belongs to the peptidase S14 family. As to quaternary structure, fourteen ClpP subunits assemble into 2 heptameric rings which stack back to back to give a disk-like structure with a central cavity, resembling the structure of eukaryotic proteasomes.

It localises to the cytoplasm. It catalyses the reaction Hydrolysis of proteins to small peptides in the presence of ATP and magnesium. alpha-casein is the usual test substrate. In the absence of ATP, only oligopeptides shorter than five residues are hydrolyzed (such as succinyl-Leu-Tyr-|-NHMec, and Leu-Tyr-Leu-|-Tyr-Trp, in which cleavage of the -Tyr-|-Leu- and -Tyr-|-Trp bonds also occurs).. Functionally, cleaves peptides in various proteins in a process that requires ATP hydrolysis. Has a chymotrypsin-like activity. Plays a major role in the degradation of misfolded proteins. The protein is ATP-dependent Clp protease proteolytic subunit 1 of Agrobacterium fabrum (strain C58 / ATCC 33970) (Agrobacterium tumefaciens (strain C58)).